We begin with the raw amino-acid sequence, 89 residues long: Small ribosomal subunit protein uS14 (89 aa).

The protein belongs to the universal ribosomal protein uS14 family. In terms of assembly, part of the 30S ribosomal subunit. Contacts proteins S3 and S10.

Functionally, binds 16S rRNA, required for the assembly of 30S particles and may also be responsible for determining the conformation of the 16S rRNA at the A site. The sequence is that of Small ribosomal subunit protein uS14 from Streptococcus pneumoniae serotype 2 (strain D39 / NCTC 7466).